The primary structure comprises 511 residues: Pancreatic alpha-amylase (511 aa).

The signal sequence occupies residues 1-15 (MKFFLLLFTIGFCWA). Glutamine 16 bears the Pyrrolidone carboxylic acid mark. 3 disulfide bridges follow: cysteine 43–cysteine 101, cysteine 85–cysteine 130, and cysteine 156–cysteine 175. 3 residues coordinate Ca(2+): asparagine 115, arginine 173, and aspartate 182. Residue arginine 210 participates in chloride binding. Aspartate 212 serves as the catalytic Nucleophile. Position 216 (histidine 216) interacts with Ca(2+). Glutamate 248 functions as the Proton donor in the catalytic mechanism. Asparagine 313 and arginine 352 together coordinate chloride. Disulfide bonds link cysteine 393–cysteine 399 and cysteine 465–cysteine 477. N-linked (GlcNAc...) asparagine glycosylation is present at asparagine 476.

Belongs to the glycosyl hydrolase 13 family. Monomer. Binds to the sea anemone inhibitor helianthamide. The cofactor is Ca(2+). It depends on chloride as a cofactor. Detected in pancreas (at protein level).

The protein resides in the secreted. It localises to the extracellular space. The enzyme catalyses Endohydrolysis of (1-&gt;4)-alpha-D-glucosidic linkages in polysaccharides containing three or more (1-&gt;4)-alpha-linked D-glucose units.. This is Pancreatic alpha-amylase (AMY2A) from Homo sapiens (Human).